A 336-amino-acid polypeptide reads, in one-letter code: Ribosomal RNA large subunit methyltransferase F (336 aa).

The protein belongs to the methyltransferase superfamily. METTL16/RlmF family.

It is found in the cytoplasm. It catalyses the reaction adenosine(1618) in 23S rRNA + S-adenosyl-L-methionine = N(6)-methyladenosine(1618) in 23S rRNA + S-adenosyl-L-homocysteine + H(+). Functionally, specifically methylates the adenine in position 1618 of 23S rRNA. The chain is Ribosomal RNA large subunit methyltransferase F from Yersinia pestis bv. Antiqua (strain Angola).